The following is a 326-amino-acid chain: Vitamin B12 import system permease protein BtuC (326 aa).

Helical transmembrane passes span 15–35, 61–81, 88–108, 112–132, 146–166, 184–204, 240–260, 274–294, and 302–322; these read WLLC…CAGE, LAVL…QALF, PGLL…VLLG, LPNW…TLIL, LLAG…AIYF, GGVD…LLWI, GWMV…GLVI, VLLP…DVVA, and ELPI…WLLL.

This sequence belongs to the binding-protein-dependent transport system permease family. FecCD subfamily. In terms of assembly, the complex is composed of two ATP-binding proteins (BtuD), two transmembrane proteins (BtuC) and a solute-binding protein (BtuF).

It is found in the cell inner membrane. In terms of biological role, part of the ABC transporter complex BtuCDF involved in vitamin B12 import. Involved in the translocation of the substrate across the membrane. The chain is Vitamin B12 import system permease protein BtuC from Escherichia coli O17:K52:H18 (strain UMN026 / ExPEC).